Consider the following 191-residue polypeptide: MNENDKMKIKEVIVVEGKDDTKRIQMAVNADTLETRGSAISDETLDQIEDLYDKRGVIVFTDPDFSGEKIRKIITEAVPGVKHAFLTKHDAAPSHKGSLGVEHASPEAIREALAHLYTEVPDGEPLISREDLAVAGLTSGPQAKEYRRRLGEYLRIGYTNGKQLYKRLKLFQITPDELKKALEYIKNEDNY.

Positions 10-93 constitute a Toprim domain; that stretch reads KEVIVVEGKD…AFLTKHDAAP (84 aa). Residues Glu16, Asp62, and Asp64 each coordinate Mg(2+).

This sequence belongs to the ribonuclease M5 family. Requires Mg(2+) as cofactor.

Its subcellular location is the cytoplasm. The catalysed reaction is Endonucleolytic cleavage of RNA, removing 21 and 42 nucleotides, respectively, from the 5'- and 3'-termini of a 5S-rRNA precursor.. In terms of biological role, required for correct processing of both the 5' and 3' ends of 5S rRNA precursor. Cleaves both sides of a double-stranded region yielding mature 5S rRNA in one step. The polypeptide is Ribonuclease M5 1 (Ligilactobacillus salivarius (strain CECT 5713) (Lactobacillus salivarius)).